The primary structure comprises 61 residues: Large ribosomal subunit protein uL30 (61 aa).

This sequence belongs to the universal ribosomal protein uL30 family. In terms of assembly, part of the 50S ribosomal subunit.

This chain is Large ribosomal subunit protein uL30, found in Neisseria meningitidis serogroup C (strain 053442).